Reading from the N-terminus, the 118-residue chain is uncharacterized protein (118 aa).

It localises to the mitochondrion. This is an uncharacterized protein from Arabidopsis thaliana (Mouse-ear cress).